Reading from the N-terminus, the 192-residue chain is Ribose 1,5-bisphosphate phosphokinase PhnN (192 aa).

It belongs to the ribose 1,5-bisphosphokinase family.

It carries out the reaction alpha-D-ribose 1,5-bisphosphate + ATP = 5-phospho-alpha-D-ribose 1-diphosphate + ADP. Its pathway is metabolic intermediate biosynthesis; 5-phospho-alpha-D-ribose 1-diphosphate biosynthesis; 5-phospho-alpha-D-ribose 1-diphosphate from D-ribose 5-phosphate (route II): step 3/3. Its function is as follows. Catalyzes the phosphorylation of ribose 1,5-bisphosphate to 5-phospho-D-ribosyl alpha-1-diphosphate (PRPP). In Achromobacter xylosoxidans (strain A8), this protein is Ribose 1,5-bisphosphate phosphokinase PhnN.